The following is a 285-amino-acid chain: 4-diphosphocytidyl-2-C-methyl-D-erythritol kinase (285 aa).

Lys12 is a catalytic residue. An ATP-binding site is contributed by 95–105 (PMGGGVGGGSS). Asp137 is a catalytic residue.

It belongs to the GHMP kinase family. IspE subfamily.

It catalyses the reaction 4-CDP-2-C-methyl-D-erythritol + ATP = 4-CDP-2-C-methyl-D-erythritol 2-phosphate + ADP + H(+). It participates in isoprenoid biosynthesis; isopentenyl diphosphate biosynthesis via DXP pathway; isopentenyl diphosphate from 1-deoxy-D-xylulose 5-phosphate: step 3/6. Its function is as follows. Catalyzes the phosphorylation of the position 2 hydroxy group of 4-diphosphocytidyl-2C-methyl-D-erythritol. The protein is 4-diphosphocytidyl-2-C-methyl-D-erythritol kinase of Actinobacillus pleuropneumoniae serotype 5b (strain L20).